Consider the following 112-residue polypeptide: ATP synthase epsilon chain (112 aa).

The protein belongs to the ATPase epsilon chain family. In terms of assembly, F-type ATPases have 2 components, CF(1) - the catalytic core - and CF(0) - the membrane proton channel. CF(1) has five subunits: alpha(3), beta(3), gamma(1), delta(1), epsilon(1). CF(0) has three main subunits: a, b and c.

The protein localises to the cell inner membrane. Its function is as follows. Produces ATP from ADP in the presence of a proton gradient across the membrane. The polypeptide is ATP synthase epsilon chain (Rickettsia rickettsii (strain Sheila Smith)).